Here is a 353-residue protein sequence, read N- to C-terminus: Rhodopsin (353 aa).

At 1–36 (MNGTEGPFFYVPMVNTTGIVRSPYDYPQYYLVSPAA) the chain is on the extracellular side. Residues Asn2 and Asn15 are each glycosylated (N-linked (GlcNAc...) asparagine). A helical membrane pass occupies residues 37-61 (YAALGAYMFLLILLGFPINFLTLYV). Residues 62 to 73 (TIEHKKLRTPLN) are Cytoplasmic-facing. The chain crosses the membrane as a helical span at residues 74-96 (YILLNLAVADLFMVFGGFTTTMY). The Extracellular segment spans residues 97–110 (TSMHGYFVLGRLGC). Cys110 and Cys187 are disulfide-bonded. The helical transmembrane segment at 111–133 (NMEGFFATLGGEIGLWSLVVLAV) threads the bilayer. The 'Ionic lock' involved in activated form stabilization motif lies at 134 to 136 (ERW). The Cytoplasmic portion of the chain corresponds to 134 to 152 (ERWLVVCKPISNFRFGENH). A helical membrane pass occupies residues 153–173 (AIMGLAFTWVMACSCAVPPLV). At 174–202 (GWSRYIPEGMQCSCGVDYYTRAEGFNNES) the chain is on the extracellular side. An N-linked (GlcNAc...) asparagine glycan is attached at Asn200. Residues 203–224 (FVIYMFACHFIIPMCVVFFCYG) traverse the membrane as a helical segment. The Cytoplasmic portion of the chain corresponds to 225–252 (RLLCAVKEAAAAQQESETTQRAEKEVTR). The chain crosses the membrane as a helical span at residues 253–274 (MVVIMGIAFLICWCPYASVAWY). The Extracellular segment spans residues 275–286 (IFTHQGSEFGPV). Residues 287 to 308 (FMTLPAFFAKTSSVYNPLIYIL) traverse the membrane as a helical segment. Lys296 bears the N6-(retinylidene)lysine mark. At 309-353 (MNKQFRHCMITTLCCGKNPFEEEEGASTASKTEASSVSSSSVSPA) the chain is on the cytoplasmic side. Residues Cys322 and Cys323 are each lipidated (S-palmitoyl cysteine). A disordered region spans residues 331–353 (EEGASTASKTEASSVSSSSVSPA). Positions 334 to 353 (ASTASKTEASSVSSSSVSPA) are enriched in low complexity.

The protein belongs to the G-protein coupled receptor 1 family. Opsin subfamily. Post-translationally, phosphorylated on some or all of the serine and threonine residues present in the C-terminal region. In terms of processing, contains one covalently linked retinal chromophore.

It is found in the membrane. The protein resides in the cell projection. Its subcellular location is the cilium. It localises to the photoreceptor outer segment. Functionally, photoreceptor required for image-forming vision at low light intensity. While most salt water fish species use retinal as chromophore, most freshwater fish use 3-dehydroretinal, or a mixture of retinal and 3-dehydroretinal. Light-induced isomerization of 11-cis to all-trans retinal triggers a conformational change that activates signaling via G-proteins. Subsequent receptor phosphorylation mediates displacement of the bound G-protein alpha subunit by arrestin and terminates signaling. This is Rhodopsin (rho) from Dicentrarchus labrax (European seabass).